The sequence spans 331 residues: Probable leucine carboxyl methyltransferase 1 (331 aa).

S-adenosyl-L-methionine contacts are provided by residues R82, G107, D131, 179–180 (DL), and E206.

The protein belongs to the methyltransferase superfamily. LCMT family.

It catalyses the reaction [phosphatase 2A protein]-C-terminal L-leucine + S-adenosyl-L-methionine = [phosphatase 2A protein]-C-terminal L-leucine methyl ester + S-adenosyl-L-homocysteine. In terms of biological role, methylates the carboxyl group of the C-terminal leucine residue of protein phosphatase 2A catalytic subunits to form alpha-leucine ester residues. This chain is Probable leucine carboxyl methyltransferase 1, found in Caenorhabditis briggsae.